The following is a 151-amino-acid chain: 4-hydroxybenzoyl-CoA thioesterase (151 aa).

The active site involves Glu73. 100 to 102 is a substrate binding site; that stretch reads FFR.

It belongs to the thioesterase PaaI family. In terms of assembly, homotetramer.

The catalysed reaction is 4-hydroxybenzoyl-CoA + H2O = 4-hydroxybenzoate + CoA + H(+). It functions in the pathway xenobiotic degradation; 4-chlorobenzoate degradation; 4-hydroxybenzoate from 4-chlorobenzoate: step 3/3. The protein is 4-hydroxybenzoyl-CoA thioesterase of Arthrobacter globiformis.